The chain runs to 216 residues: Protein-L-isoaspartate O-methyltransferase (216 aa).

Residue Ser64 is part of the active site.

This sequence belongs to the methyltransferase superfamily. L-isoaspartyl/D-aspartyl protein methyltransferase family.

It localises to the cytoplasm. The catalysed reaction is [protein]-L-isoaspartate + S-adenosyl-L-methionine = [protein]-L-isoaspartate alpha-methyl ester + S-adenosyl-L-homocysteine. Functionally, catalyzes the methyl esterification of L-isoaspartyl residues in peptides and proteins that result from spontaneous decomposition of normal L-aspartyl and L-asparaginyl residues. It plays a role in the repair and/or degradation of damaged proteins. In Paracoccus denitrificans (strain Pd 1222), this protein is Protein-L-isoaspartate O-methyltransferase.